The chain runs to 400 residues: Phosphoglycerate kinase (400 aa).

Residues 24–26 (DFN), Arg-39, 62–65 (HLGK), Arg-123, and Arg-156 contribute to the substrate site. Residues Lys-207, Gly-298, Glu-329, and 356 to 359 (GGDS) each bind ATP.

The protein belongs to the phosphoglycerate kinase family. In terms of assembly, monomer.

It is found in the cytoplasm. It catalyses the reaction (2R)-3-phosphoglycerate + ATP = (2R)-3-phospho-glyceroyl phosphate + ADP. The protein operates within carbohydrate degradation; glycolysis; pyruvate from D-glyceraldehyde 3-phosphate: step 2/5. This is Phosphoglycerate kinase from Clostridioides difficile (strain 630) (Peptoclostridium difficile).